A 330-amino-acid polypeptide reads, in one-letter code: Mas-related G-protein coupled receptor member X2 (330 aa).

At 1–33 (MDPTTLVWGTESTTMNGNDQALPLLCGKETLIL) the chain is on the extracellular side. Residues 34 to 54 (VVLILFIALVGLVGNAFVLWL) form a helical membrane-spanning segment. Residues 55–63 (LGFRMRRNA) are Cytoplasmic-facing. Residues 64 to 84 (FSVYVLSLAGADFLFLCFPMI) form a helical membrane-spanning segment. Topologically, residues 85-96 (NCLAYLINFFHS) are extracellular. The helical transmembrane segment at 97–117 (ISINFPSFFTTVMTCAYLAGL) threads the bilayer. The Cytoplasmic portion of the chain corresponds to 118–144 (SMLSAISTERCLSVLWPIWYRSRRPRH). Residues 145-165 (LSAVMCVLLWALSLLLSILEG) traverse the membrane as a helical segment. Topologically, residues 166 to 184 (KFCGFLFSDGDSGWCQTFD) are extracellular. A helical transmembrane segment spans residues 185 to 205 (FITAAWLMFLFVVLCGSSLAL). At 206-228 (LVRILCGSRGLPLTRLYLTILLT) the chain is on the cytoplasmic side. A helical transmembrane segment spans residues 229 to 249 (VLIFLLCGLPFGIQWFLILWI). The Extracellular portion of the chain corresponds to 250–264 (WKNSDVLFCHIHPVS). A helical membrane pass occupies residues 265–285 (VVLSSFNSSANPIIYFFVGSF). Residues 286–330 (RKQWRLRQPVLKLALQRALQDTAEVDHSEGCFSQGTLEMSGSSLV) are Cytoplasmic-facing.

The protein belongs to the G-protein coupled receptor 1 family. Mas subfamily.

Its subcellular location is the cell membrane. Mast cell-specific receptor for basic secretagogues, i.e. cationic amphiphilic drugs, as well as endo- or exogenous peptides, consisting of a basic head group and a hydrophobic core. Recognizes and binds small molecules containing a cyclized tetrahydroisoquinoline (THIQ), such as non-steroidal neuromuscular blocking drugs (NMBDs), including tubocurarine and atracurium. In response to these compounds, mediates pseudo-allergic reactions characterized by histamine release, inflammation and airway contraction. In Trachypithecus francoisi (Francois' leaf monkey), this protein is Mas-related G-protein coupled receptor member X2 (MRGPRX2).